Consider the following 316-residue polypeptide: tRNA dimethylallyltransferase (316 aa).

ATP is bound at residue 17 to 24 (GPTASGKT). A substrate-binding site is contributed by 19–24 (TASGKT). Interaction with substrate tRNA regions lie at residues 42–45 (DSAL), 166–170 (QRLSR), and 247–252 (RCVGYR).

This sequence belongs to the IPP transferase family. As to quaternary structure, monomer. Mg(2+) serves as cofactor.

It carries out the reaction adenosine(37) in tRNA + dimethylallyl diphosphate = N(6)-dimethylallyladenosine(37) in tRNA + diphosphate. Functionally, catalyzes the transfer of a dimethylallyl group onto the adenine at position 37 in tRNAs that read codons beginning with uridine, leading to the formation of N6-(dimethylallyl)adenosine (i(6)A). The protein is tRNA dimethylallyltransferase of Salmonella arizonae (strain ATCC BAA-731 / CDC346-86 / RSK2980).